A 1159-amino-acid polypeptide reads, in one-letter code: ABC transporter G family member 24 (1159 aa).

2 helical membrane passes run 11–31 (FNSI…GNNC) and 415–435 (VGSG…FLIF). Residues 454–707 (LSFHNISCYV…FIKQKIAGMT (254 aa)) form the ABC transporter domain. Residue 497–504 (GLSGSGKT) participates in ATP binding. Positions 752-846 (QSTSPALSSN…DNNNKNNDDD (95 aa)) are disordered. Composition is skewed to low complexity over residues 759-768 (SSNSNNSDIN) and 775-784 (INNPHNQNIH). A compositionally biased stretch (basic residues) spans 785-795 (HQQHHHHHRHI). A compositionally biased stretch (low complexity) spans 822-841 (DNINNNNNNNKVKNNDNNNK). One can recognise an ABC transmembrane type-2 domain in the interval 902 to 1154 (FLLRTTYFVH…LLAYVFLRFL (253 aa)). The next 6 membrane-spanning stretches (helical) occupy residues 909-929 (FVHI…PANL), 937-957 (FGAM…SLDL), 1005-1025 (YMIG…SLVL), 1047-1067 (ANMV…FLLA), 1074-1094 (YLIG…PVVN), and 1135-1155 (VLLG…RFLV).

The protein belongs to the ABC transporter superfamily. ABCG family. Eye pigment precursor importer (TC 3.A.1.204) subfamily.

The protein localises to the membrane. The chain is ABC transporter G family member 24 (abcG24) from Dictyostelium discoideum (Social amoeba).